Consider the following 381-residue polypeptide: tRNA pseudouridine synthase D (381 aa).

Aspartate 81 serves as the catalytic Nucleophile. Residues 160 to 335 (GMPNYFGSQR…TLGSRRFFWV (176 aa)) enclose the TRUD domain.

It belongs to the pseudouridine synthase TruD family.

The enzyme catalyses uridine(13) in tRNA = pseudouridine(13) in tRNA. Its function is as follows. Responsible for synthesis of pseudouridine from uracil-13 in transfer RNAs. The protein is tRNA pseudouridine synthase D of Helicobacter acinonychis (strain Sheeba).